Here is a 94-residue protein sequence, read N- to C-terminus: Small ribosomal subunit protein bS18 (94 aa).

The segment covering 1-12 has biased composition (low complexity); that stretch reads MSEQNSRPQNSE. The tract at residues 1–29 is disordered; the sequence is MSEQNSRPQNSERPQRSRRPQGGPRRRRK. A compositionally biased stretch (basic residues) spans 16-29; that stretch reads RSRRPQGGPRRRRK.

It belongs to the bacterial ribosomal protein bS18 family. Part of the 30S ribosomal subunit. Forms a tight heterodimer with protein bS6.

Binds as a heterodimer with protein bS6 to the central domain of the 16S rRNA, where it helps stabilize the platform of the 30S subunit. This Leuconostoc mesenteroides subsp. mesenteroides (strain ATCC 8293 / DSM 20343 / BCRC 11652 / CCM 1803 / JCM 6124 / NCDO 523 / NBRC 100496 / NCIMB 8023 / NCTC 12954 / NRRL B-1118 / 37Y) protein is Small ribosomal subunit protein bS18.